Reading from the N-terminus, the 188-residue chain is Adenine phosphoribosyltransferase (188 aa).

It belongs to the purine/pyrimidine phosphoribosyltransferase family. As to quaternary structure, homodimer.

The protein localises to the cytoplasm. The catalysed reaction is AMP + diphosphate = 5-phospho-alpha-D-ribose 1-diphosphate + adenine. Its pathway is purine metabolism; AMP biosynthesis via salvage pathway; AMP from adenine: step 1/1. Catalyzes a salvage reaction resulting in the formation of AMP, that is energically less costly than de novo synthesis. The sequence is that of Adenine phosphoribosyltransferase from Paraburkholderia phymatum (strain DSM 17167 / CIP 108236 / LMG 21445 / STM815) (Burkholderia phymatum).